The chain runs to 229 residues: MANATPNGSVPHNHVGAVLPTIPTIKIDEKQTLATSEDHTSIDYLQRAQWLRAAVLGANDGLVSVTSLMMGVGAVKKDAKAMLVAGFAGLVAGACGMAIGEFVAVCTQYEVELGQMKREMNMSEGGERDLETEKRTLPNPLQATWASALSFSIGALVPLLSAAFVADYRTRVIVVVAMASLALVVFGSVGAQLGKTPKLKSCVRFLLGGWIAMSITFGLTKLMGASALE.

The next 5 helical transmembrane spans lie at 55-75 (VLGA…VGAV), 83-103 (LVAG…GEFV), 145-165 (WASA…AAFV), 172-192 (VIVV…VGAQ), and 205-225 (FLLG…LMGA).

It belongs to the CCC1 family. As to expression, highly expressed in the fixation zone of the root nodule. No or low-level expression in root, leaf and stem.

The protein resides in the endoplasmic reticulum membrane. It localises to the vacuole membrane. The catalysed reaction is Fe(2+)(in) = Fe(2+)(out). Iron transporter that is involved in accumulation of Fe(2+) ions in the fixation zone of the root nodules. Exhibits low-level iron transport activity. The chain is VIT-like transporter 1b from Glycine max (Soybean).